A 117-amino-acid polypeptide reads, in one-letter code: Large ribosomal subunit protein bL19 (117 aa).

Belongs to the bacterial ribosomal protein bL19 family.

Its function is as follows. This protein is located at the 30S-50S ribosomal subunit interface and may play a role in the structure and function of the aminoacyl-tRNA binding site. The polypeptide is Large ribosomal subunit protein bL19 (Sorangium cellulosum (strain So ce56) (Polyangium cellulosum (strain So ce56))).